The primary structure comprises 233 residues: Ribitol-5-phosphate cytidylyltransferase (233 aa).

CTP-binding positions include 7–10 and 80–86; these read LAGG and GADRNET.

Belongs to the IspD/TarI cytidylyltransferase family. TarI subfamily.

The catalysed reaction is D-ribitol 5-phosphate + CTP + H(+) = CDP-L-ribitol + diphosphate. It functions in the pathway cell wall biogenesis; poly(ribitol phosphate) teichoic acid biosynthesis. Its function is as follows. Catalyzes the transfer of the cytidylyl group of CTP to D-ribitol 5-phosphate. The protein is Ribitol-5-phosphate cytidylyltransferase of Lactiplantibacillus plantarum (strain ATCC BAA-793 / NCIMB 8826 / WCFS1) (Lactobacillus plantarum).